The primary structure comprises 196 residues: V-type proton ATPase subunit E (196 aa).

This sequence belongs to the V-ATPase E subunit family.

Produces ATP from ADP in the presence of a proton gradient across the membrane. The protein is V-type proton ATPase subunit E of Clostridium botulinum (strain Eklund 17B / Type B).